A 193-amino-acid polypeptide reads, in one-letter code: MAVQKNVIKGILAGTFALMLSGCVTVPDAIKGSSPTPQQDLVRVMSAPQLYVGQEARFGGKVVAVQNQQGKTRLEIATVPLDSGARPTLGEPSRGRIYADVNGFLDPVDFRGQLVTVVGPITGAVDGKIGNTPYKFMVMQVTGYKRWHLTQQVIMPPQPIDPWFYGGRGWPYGYGGWGWYNPGPARVQTVVTE.

The signal sequence occupies residues 1–22 (MAVQKNVIKGILAGTFALMLSG). Cys23 carries N-palmitoyl cysteine lipidation. The S-diacylglycerol cysteine moiety is linked to residue Cys23.

It is found in the cell membrane. This is an uncharacterized protein from Escherichia coli (strain K12).